The primary structure comprises 263 residues: Nitrogenase iron protein 2 (263 aa).

ATP is bound at residue 9-16 (GKGGIGKS). C92 lines the [4Fe-4S] cluster pocket. The residue at position 95 (R95) is an ADP-ribosylarginine; by dinitrogenase reductase ADP-ribosyltransferase. C127 serves as a coordination point for [4Fe-4S] cluster.

This sequence belongs to the NifH/BchL/ChlL family. In terms of assembly, homodimer. Requires [4Fe-4S] cluster as cofactor. In terms of processing, the reversible ADP-ribosylation of Arg-95 inactivates the nitrogenase reductase and regulates nitrogenase activity.

The catalysed reaction is N2 + 8 reduced [2Fe-2S]-[ferredoxin] + 16 ATP + 16 H2O = H2 + 8 oxidized [2Fe-2S]-[ferredoxin] + 2 NH4(+) + 16 ADP + 16 phosphate + 6 H(+). Functionally, the key enzymatic reactions in nitrogen fixation are catalyzed by the nitrogenase complex, which has 2 components: the iron protein and the molybdenum-iron protein. The chain is Nitrogenase iron protein 2 (nifH2) from Methanobacterium ivanovii.